The chain runs to 81 residues: Large ribosomal subunit protein bL31B (81 aa).

The protein belongs to the bacterial ribosomal protein bL31 family. Type B subfamily. Part of the 50S ribosomal subunit.

The chain is Large ribosomal subunit protein bL31B from Bacillus anthracis (strain A0248).